We begin with the raw amino-acid sequence, 480 residues long: DNA repair protein RadA (480 aa).

The C4-type zinc-finger motif lies at 10-27; that stretch reads CSECRHVSAKWVGRCLEC. 95–102 contacts ATP; that stretch reads GDPGVGKS. The short motif at 254-258 is the RadA KNRFG motif element; sequence KNRFG. A lon-protease-like region spans residues 353-480; sequence DIYLSTVGGM…TGHVPLGRGT (128 aa). The interval 459–480 is disordered; it reads GTTLATPPSHSGTGHVPLGRGT. The segment covering 461–470 has biased composition (polar residues); sequence TLATPPSHSG.

It belongs to the RecA family. RadA subfamily.

DNA-dependent ATPase involved in processing of recombination intermediates, plays a role in repairing DNA breaks. Stimulates the branch migration of RecA-mediated strand transfer reactions, allowing the 3' invading strand to extend heteroduplex DNA faster. Binds ssDNA in the presence of ADP but not other nucleotides, has ATPase activity that is stimulated by ssDNA and various branched DNA structures, but inhibited by SSB. Does not have RecA's homology-searching function. This is DNA repair protein RadA from Mycobacterium tuberculosis (strain CDC 1551 / Oshkosh).